Reading from the N-terminus, the 83-residue chain is NADH dehydrogenase [ubiquinone] iron-sulfur protein 5-B (83 aa).

The region spanning 11–52 (KGRCYDFWMDFSECMSHCREPKDCTLLREDYLECLHHSKEFQ) is the CHCH domain. 2 consecutive short sequence motifs (cx9C motif) follow at residues 14 to 24 (CYDFWMDFSEC) and 34 to 44 (CTLLREDYLEC). Disulfide bonds link Cys-14/Cys-44 and Cys-24/Cys-34. The disordered stretch occupies residues 62-83 (QRKLRAASRKGEETGDGTHTHH).

The protein belongs to the complex I NDUFS5 subunit family. As to quaternary structure, complex I is composed of at least 49 different subunits. This is a component of the iron-sulfur (IP) fragment of the enzyme.

Its subcellular location is the mitochondrion. The protein resides in the mitochondrion inner membrane. It is found in the mitochondrion intermembrane space. Its function is as follows. Accessory subunit of the mitochondrial membrane respiratory chain NADH dehydrogenase (Complex I), that is believed not to be involved in catalysis. Complex I functions in the transfer of electrons from NADH to the respiratory chain. The immediate electron acceptor for the enzyme is believed to be ubiquinone. The sequence is that of NADH dehydrogenase [ubiquinone] iron-sulfur protein 5-B from Arabidopsis thaliana (Mouse-ear cress).